A 524-amino-acid polypeptide reads, in one-letter code: uncharacterized protein (524 aa).

The helical transmembrane segment at 13–33 (EFILLILGMTVVGIVITMGLV) threads the bilayer.

It localises to the membrane. This is an uncharacterized protein from Methanocaldococcus jannaschii (strain ATCC 43067 / DSM 2661 / JAL-1 / JCM 10045 / NBRC 100440) (Methanococcus jannaschii).